The primary structure comprises 146 residues: D-aminoacyl-tRNA deacylase (146 aa).

The Gly-cisPro motif, important for rejection of L-amino acids signature appears at 138–139 (GP).

Belongs to the DTD family. Homodimer.

The protein localises to the cytoplasm. It carries out the reaction glycyl-tRNA(Ala) + H2O = tRNA(Ala) + glycine + H(+). The catalysed reaction is a D-aminoacyl-tRNA + H2O = a tRNA + a D-alpha-amino acid + H(+). Functionally, an aminoacyl-tRNA editing enzyme that deacylates mischarged D-aminoacyl-tRNAs. Also deacylates mischarged glycyl-tRNA(Ala), protecting cells against glycine mischarging by AlaRS. Acts via tRNA-based rather than protein-based catalysis; rejects L-amino acids rather than detecting D-amino acids in the active site. By recycling D-aminoacyl-tRNA to D-amino acids and free tRNA molecules, this enzyme counteracts the toxicity associated with the formation of D-aminoacyl-tRNA entities in vivo and helps enforce protein L-homochirality. This chain is D-aminoacyl-tRNA deacylase, found in Xanthomonas euvesicatoria pv. vesicatoria (strain 85-10) (Xanthomonas campestris pv. vesicatoria).